A 327-amino-acid polypeptide reads, in one-letter code: Phenylalanine--tRNA ligase alpha subunit (327 aa).

Residue Glu-252 coordinates Mg(2+).

The protein belongs to the class-II aminoacyl-tRNA synthetase family. Phe-tRNA synthetase alpha subunit type 1 subfamily. Tetramer of two alpha and two beta subunits. The cofactor is Mg(2+).

It localises to the cytoplasm. The catalysed reaction is tRNA(Phe) + L-phenylalanine + ATP = L-phenylalanyl-tRNA(Phe) + AMP + diphosphate + H(+). In Vibrio vulnificus (strain CMCP6), this protein is Phenylalanine--tRNA ligase alpha subunit.